The sequence spans 277 residues: MALKKYKPITNGRRNMTTLDFAEITKTTPEKSLLQPLPKRAGRNNQGKLTVRHHGGGHKRQYRVIDFKRNKDGIIAKVDSIQYDPNRSANIALLVYADGEKRYIIAPKGLQVGQTVESGAEADIKVGNALPLQNIPVGTVIHNIELKPGKGGQLARSAGASSQVLGKEGKYVLIRLRSGEVRMILSTCRATIGQVGNLQHELVNVGKAGRSRWKGVRPTVRGSVMNPNDHPHGGGEGRAPIGRPSPMSPWGKPTLGKKTRRGKKSSDKLIVRGRKKK.

The disordered stretch occupies residues S211–K277.

This sequence belongs to the universal ribosomal protein uL2 family. In terms of assembly, part of the 50S ribosomal subunit. Forms a bridge to the 30S subunit in the 70S ribosome.

Its function is as follows. One of the primary rRNA binding proteins. Required for association of the 30S and 50S subunits to form the 70S ribosome, for tRNA binding and peptide bond formation. It has been suggested to have peptidyltransferase activity; this is somewhat controversial. Makes several contacts with the 16S rRNA in the 70S ribosome. This is Large ribosomal subunit protein uL2 from Staphylococcus epidermidis (strain ATCC 35984 / DSM 28319 / BCRC 17069 / CCUG 31568 / BM 3577 / RP62A).